Reading from the N-terminus, the 307-residue chain is Barttin (307 aa).

Topologically, residues 1 to 5 (MADEK) are cytoplasmic. The segment at 1–72 (MADEKTFRIG…VPADSDFQGI (72 aa)) is regulates channel membrane trafficking and anion conductance. Residues 6-26 (TFRIGFIVLGLFLLSLGTFLM) form a helical membrane-spanning segment. Residues 27–32 (SHDRPQ) lie on the Extracellular side of the membrane. Residues 33-53 (VYGTFYAMGSVMVIGGVIWSM) traverse the membrane as a helical segment. 2 S-palmitoyl cysteine lipidation sites follow: Cys54 and Cys56. The Cytoplasmic segment spans residues 54 to 307 (CQCYPKITFV…ELGFEPDIQG (254 aa)). A phosphoserine mark is found at Ser79 and Ser107. Disordered regions lie at residues 135-154 (TGAS…WMEA) and 161-224 (GSDE…RGPL). The span at 161-171 (GSDENEGEKSH) shows a compositional bias: basic and acidic residues. At Ser162 the chain carries Phosphoserine. Over residues 172–183 (SQSSPSVGPQGS) the composition is skewed to low complexity. The segment covering 198-207 (SEGSSLQPSP) has biased composition (polar residues). A phosphoserine mark is found at Ser228 and Ser289. The interval 255–307 (RKQQWSLRMKGETVQARAEEPEQEEEDLYYGLPDSPGNPLPDKELGFEPDIQG) is disordered.

As to quaternary structure, interacts with CLCNK channels. Forms probably heteromers with CLCNKA in the thin ascending limb of Henle and with CLCNKB in the thick ascending limb and more distal segments. Palmitoylation is necessary for activation of plasma membrane-inserted CLC-K/barttin channels. In terms of tissue distribution, expression is evident in inner and outer stripes of the outer medulla of the kidney, most probably representing thin limbs of Henle's loop together with some collecting duct coursing through the outer stripe. In situ hybridization in fetal kidney at 18.5 dpc revealed a clear continuity between hybridization signals from the thin limb of Henle's loop and the distal convoluted tubule, suggesting that part of the expression pattern may result from expression in the thick ascending limb of Henle's loop. In addition, strong signals are present in a subset of cortical tubules, representing distal convoluted tubules or cortical collecting duct. Strong expression is also observed in the inner medulla of the kidney. This expression does not extend all the way to the tip of the papilla. Thus this signal most probably represents cells of the thin ascending limbs. In the inner ear, strong and exclusive expression is detected in marginal cells of the stria vascularis. In addition to cochlear signal, expression is observed in dark cells localized at the base of the crista ampullaris of the vestibular organ.

The protein resides in the basolateral cell membrane. Regulatory subunit of anion-selective CLCNKA:BSND and CLCNKB:BSND heteromeric channels involved in basolateral chloride conductance along the nephron to achieve urine concentration and maintain systemic acid-base homeostasis, and in the stria vascularis of the inner ear to establish the endocochlear potential necessary for normal hearing. Most likely acts as a chaperone that allosterically regulates proper sorting of CLCNKA:BSND and CLCNKB:BSND channels at the basolateral plasma membrane domain and functional switch to ion conducting state. Mediates constitutive opening of channel common gates. This chain is Barttin, found in Mus musculus (Mouse).